A 249-amino-acid chain; its full sequence is DNA repair protein RecO (249 aa).

Belongs to the RecO family.

Involved in DNA repair and RecF pathway recombination. The chain is DNA repair protein RecO from Rhodopseudomonas palustris (strain BisB5).